The primary structure comprises 195 residues: Probable GTP-binding protein EngB (195 aa).

The region spanning 24-195 is the EngB-type G domain; it reads DWPEIALAGR…EAWEAILRYL (172 aa). GTP is bound by residues 32-39, 59-63, 77-80, 144-147, and 176-178; these read GRSNVGKS, GKTQL, DVPG, TKAD, and FSS. Positions 39 and 61 each coordinate Mg(2+).

This sequence belongs to the TRAFAC class TrmE-Era-EngA-EngB-Septin-like GTPase superfamily. EngB GTPase family. It depends on Mg(2+) as a cofactor.

Its function is as follows. Necessary for normal cell division and for the maintenance of normal septation. The sequence is that of Probable GTP-binding protein EngB from Lactococcus lactis subsp. lactis (strain IL1403) (Streptococcus lactis).